The following is a 337-amino-acid chain: Dimethyladenosine transferase 1, mitochondrial (337 aa).

A mitochondrion-targeting transit peptide spans 1–84 (MSQVTARVLN…RSILRRQPQR (84 aa)). S-adenosyl-L-methionine contacts are provided by residues 38-41 (QNFL), asparagine 39, leucine 41, glycine 67, glutamate 89, aspartate 118, and asparagine 140.

Belongs to the class I-like SAM-binding methyltransferase superfamily. rRNA adenine N(6)-methyltransferase family. KsgA subfamily.

It is found in the mitochondrion. Its function is as follows. Probable S-adenosyl-L-methionine-dependent methyltransferase which specifically dimethylates mitochondrial 12S rRNA at the conserved stem loop. The sequence is that of Dimethyladenosine transferase 1, mitochondrial (mtTFB1) from Drosophila pseudoobscura pseudoobscura (Fruit fly).